A 292-amino-acid polypeptide reads, in one-letter code: NAC domain-containing protein 105 (292 aa).

The 151-residue stretch at 12–162 (IPPGFRFHPT…GWVVCRAFKK (151 aa)) folds into the NAC domain. A DNA-binding region spans residues 112–168 (IGMRKTLVFYRGRAPNGQKSDWIIHEYYSLESHQNSPPQEEGWVVCRAFKKRTTIPT). A compositionally biased stretch (polar residues) spans 237–259 (LPQLESPSLPSEITPHSTTFSEN). The disordered stretch occupies residues 237-269 (LPQLESPSLPSEITPHSTTFSENSSRKDDMSSE). Residues 260–269 (SSRKDDMSSE) show a composition bias toward basic and acidic residues.

The protein belongs to the plant vascular related NAC-domain protein family. As to quaternary structure, interacts with NAC030/VND7. In terms of tissue distribution, detected in root protoxylem and metaxylem poles and in vessels of protoxylems, outermost metaxylems, inner metaxylems, shoots and hypocotyls. Expressed in roots, hypocotyls, cotyledons and leaves. Present in developing xylems. Present in root developing xylems. Specifically expressed in vessels but not in interfascicular fibers in stems.

It localises to the nucleus. In terms of biological role, transcription activator that binds to the secondary wall NAC binding element (SNBE), 5'-(T/A)NN(C/T)(T/C/G)TNNNNNNNA(A/C)GN(A/C/T)(A/T)-3', in the promoter of target genes. Involved in xylem formation by promoting the expression of secondary wall-associated transcription factors and of genes involved in secondary wall biosynthesis and programmed cell death, genes driven by the secondary wall NAC binding element (SNBE). Triggers thickening of secondary walls. This is NAC domain-containing protein 105 from Arabidopsis thaliana (Mouse-ear cress).